Consider the following 261-residue polypeptide: Guanine nucleotide exchange factor BopE (261 aa).

The protein belongs to the GEF (guanine exchange factor) SopE family. In terms of assembly, monomer. Interacts with human CDC42.

It is found in the secreted. Functionally, activator for both CDC42 and RAC1 by directly interacting with these Rho GTPases and acting as a guanine nucleotide exchange factor (GEF). This activation results in actin cytoskeleton rearrangements and stimulates membrane ruffling, thus promoting bacterial entry into non-phagocytic cells. The chain is Guanine nucleotide exchange factor BopE (bopE) from Burkholderia pseudomallei (strain 1710b).